We begin with the raw amino-acid sequence, 318 residues long: Ankyrin repeat and SOCS box protein 7 (318 aa).

7 ANK repeats span residues 13–42 (QEES…SPNG), 46–75 (NGWT…DPTV), 80–109 (GGFT…RSDI), 116–145 (DGWT…EVDP), 149–178 (KGTT…NIDI), 180–208 (NGFL…DTNL), and 213–242 (DGQT…DTNT). The region spanning 265–318 (LDFLQEVTRQPRNLQDLCRIKIRQCIGLQNLKLLDELPIAKVMKDYLKHKSDDI) is the SOCS box domain.

It belongs to the ankyrin SOCS box (ASB) family. As to quaternary structure, interacts with CUL5. Interacts with RNF7. Interacts with PSRC1.

Its pathway is protein modification; protein ubiquitination. Its function is as follows. Probable substrate-recognition component of a SCF-like ECS (Elongin-Cullin-SOCS-box protein) E3 ubiquitin-protein ligase complex which mediates the ubiquitination and subsequent proteasomal degradation of target proteins. Plays a role in spindle dynamics and genome integrity by targeting the mitotic progression protein PSRC1 for proteasomal degradation in a cell cycle-dependent manner. Also participates in meiosis by mediating the proper attachment between kinetochores and microtubules. This chain is Ankyrin repeat and SOCS box protein 7 (ASB7), found in Pongo abelii (Sumatran orangutan).